We begin with the raw amino-acid sequence, 276 residues long: MLMITSFANPRVAQAFVDYMATQGVILTIQQHNQSDIWLADESQAERVRVELARFIENPGDPRYLAASWQSGQTNSGLRYRRFPFLATLRERAGPVTWIVMLACVVVYIAMSLIGDQTVMVWLAWPFDPVLKFEVWRYFTHIFMHFSLMHILFNLLWWWYLGGAVEKRLGSGKLIVITVISALLSGYVQQKFSGPWFGGLSGVVYALMGYVWLRGERDPQSGIYLQRGLIIFALLWIVASWFDWFGMSMANGAHIAGLIVGLAMAFVDTLNARKRT.

6 consecutive transmembrane segments (helical) span residues 94–114, 142–162, 169–189, 192–212, 229–249, and 250–270; these read GPVTWIVMLACVVVYIAMSLI, IFMHFSLMHILFNLLWWWYLG, LGSGKLIVITVISALLSGYVQ, FSGPWFGGLSGVVYALMGYVW, LIIFALLWIVASWFDWFGMSM, and ANGAHIAGLIVGLAMAFVDTL. Ser-201 serves as the catalytic Nucleophile. Residue His-254 is part of the active site.

It belongs to the peptidase S54 family.

It is found in the cell inner membrane. The enzyme catalyses Cleaves type-1 transmembrane domains using a catalytic dyad composed of serine and histidine that are contributed by different transmembrane domains.. Functionally, rhomboid-type serine protease that catalyzes intramembrane proteolysis. The polypeptide is Rhomboid protease GlpG (Salmonella paratyphi A (strain ATCC 9150 / SARB42)).